A 598-amino-acid polypeptide reads, in one-letter code: Arginine--tRNA ligase (598 aa).

A 'HIGH' region motif is present at residues 131–141 (ANPTGPMHVGH). Residues 288–308 (KLPPPKSKKGQPPAQPQPDEE) form a disordered region.

This sequence belongs to the class-I aminoacyl-tRNA synthetase family. As to quaternary structure, monomer.

It is found in the cytoplasm. The enzyme catalyses tRNA(Arg) + L-arginine + ATP = L-arginyl-tRNA(Arg) + AMP + diphosphate. In Anaeromyxobacter sp. (strain K), this protein is Arginine--tRNA ligase.